The sequence spans 107 residues: Ferredoxin (107 aa).

Residues M1 to N8 constitute a propeptide that is removed on maturation. [2Fe-2S] cluster is bound by residues C45, C51, and C54.

[2Fe-2S] cluster is required as a cofactor.

It localises to the hydrogenosome. Functionally, ferredoxins are iron-sulfur proteins that transfer electrons in a wide variety of metabolic reactions. This Psalteriomonas lanterna (Amoeboflagellate) protein is Ferredoxin.